A 663-amino-acid polypeptide reads, in one-letter code: DNA topoisomerase 4 subunit B (663 aa).

ATP is bound by residues tyrosine 7, asparagine 47, aspartate 74, 114–120, and lysine 341; that span reads GLHGVGA. A disordered region spans residues 386–416; that stretch reads REAARKAREDARSGKKNKRKDTLLSGKLTPA. A compositionally biased stretch (basic and acidic residues) spans 387 to 398; sequence EAARKAREDARS. The Toprim domain occupies 424–538; it reads NELYLVEGDS…ADRVFIALPP (115 aa). Mg(2+) contacts are provided by glutamate 430, aspartate 503, and aspartate 505.

The protein belongs to the type II topoisomerase family. ParE type 2 subfamily. As to quaternary structure, heterotetramer composed of ParC and ParE. Mg(2+) is required as a cofactor. The cofactor is Mn(2+). Requires Ca(2+) as cofactor.

It catalyses the reaction ATP-dependent breakage, passage and rejoining of double-stranded DNA.. Functionally, topoisomerase IV is essential for chromosome segregation. It relaxes supercoiled DNA. Performs the decatenation events required during the replication of a circular DNA molecule. The protein is DNA topoisomerase 4 subunit B of Staphylococcus aureus (strain MSSA476).